An 872-amino-acid chain; its full sequence is UPF0182 protein Noc_0961 (872 aa).

7 helical membrane passes run F8–E28, L56–V76, S109–F129, L159–L179, W207–Q227, P254–I274, and T282–L302.

Belongs to the UPF0182 family.

The protein localises to the cell membrane. This Nitrosococcus oceani (strain ATCC 19707 / BCRC 17464 / JCM 30415 / NCIMB 11848 / C-107) protein is UPF0182 protein Noc_0961.